Here is a 377-residue protein sequence, read N- to C-terminus: Probable tRNA pseudouridine synthase D (377 aa).

The active-site Nucleophile is the aspartate 89. The region spanning 160–377 (YLPAFIGYQR…ILRGDPRKFT (218 aa)) is the TRUD domain.

This sequence belongs to the pseudouridine synthase TruD family.

The enzyme catalyses uridine(13) in tRNA = pseudouridine(13) in tRNA. Its function is as follows. Could be responsible for synthesis of pseudouridine from uracil-13 in transfer RNAs. The chain is Probable tRNA pseudouridine synthase D from Saccharolobus solfataricus (strain ATCC 35092 / DSM 1617 / JCM 11322 / P2) (Sulfolobus solfataricus).